A 532-amino-acid chain; its full sequence is Cytokinin dehydrogenase 8 (532 aa).

An N-terminal signal peptide occupies residues 1-26; sequence MELKAMYLYAAVLAVLLCSSVNFIQS. The 188-residue stretch at 51-238 folds into the FAD-binding PCMH-type domain; that stretch reads VSDAPFAVMR…TRARIPLQLA (188 aa). FAD contacts are provided by A87, G89, and G91. Pros-8alpha-FAD histidine is present on H92. 7 residues coordinate FAD: S93, Q97, D162, T167, S173, I177, and I228. N-linked (GlcNAc...) asparagine glycosylation is present at N420. Y482 and Q520 together coordinate FAD.

Belongs to the oxygen-dependent FAD-linked oxidoreductase family. Monomer. It depends on FAD as a cofactor.

The protein localises to the secreted. The protein resides in the extracellular space. The enzyme catalyses N(6)-dimethylallyladenine + A + H2O = 3-methyl-2-butenal + adenine + AH2. Functionally, catalyzes the oxidation of cytokinins, a family of N(6)-substituted adenine derivatives that are plant hormones, where the substituent is an isopentenyl group. The polypeptide is Cytokinin dehydrogenase 8 (CKX8) (Oryza sativa subsp. indica (Rice)).